The sequence spans 297 residues: Urease accessory protein UreD (297 aa).

The interval 1–41 (MPQAADIATAPQRPSAPGDVVAAGQPPRARGRAHVSSKRRD) is disordered.

The protein belongs to the UreD family. UreD, UreF and UreG form a complex that acts as a GTP-hydrolysis-dependent molecular chaperone, activating the urease apoprotein by helping to assemble the nickel containing metallocenter of UreC. The UreE protein probably delivers the nickel.

It localises to the cytoplasm. Its function is as follows. Required for maturation of urease via the functional incorporation of the urease nickel metallocenter. This chain is Urease accessory protein UreD, found in Ruegeria sp. (strain TM1040) (Silicibacter sp.).